Reading from the N-terminus, the 247-residue chain is HTH-type transcriptional regulator SarU (247 aa).

DNA-binding regions (H-T-H motif) lie at residues 53–76 and 178–201; these read LKEIIGDILYKQSDVVKNIKSLSK and LKDLFESIRFMYPQIVRSVNRLNN.

The protein belongs to the SarA family.

The protein resides in the cytoplasm. Functionally, positive regulator of RNAII and RNAIII in a cell density-dependent manner. It can contribute to the expression of virulence genes controlled by agr. May also regulate target genes via an agr-independent pathway. This is HTH-type transcriptional regulator SarU (sarU) from Staphylococcus aureus (strain COL).